We begin with the raw amino-acid sequence, 210 residues long: High frequency lysogenization protein HflD homolog (210 aa).

Residues E103–Q130 are a coiled coil.

This sequence belongs to the HflD family.

The protein resides in the cytoplasm. It is found in the cell inner membrane. The polypeptide is High frequency lysogenization protein HflD homolog (Actinobacillus pleuropneumoniae serotype 5b (strain L20)).